A 60-amino-acid polypeptide reads, in one-letter code: Cytotoxin 1 (60 aa).

4 cysteine pairs are disulfide-bonded: C3/C21, C14/C38, C42/C53, and C54/C59.

Belongs to the three-finger toxin family. Short-chain subfamily. Type IA cytotoxin sub-subfamily. In terms of assembly, monomer in solution; Homodimer and oligomer in the presence of negatively charged lipids forming a pore with a size ranging between 20 and 30 Angstroms. Expressed by the venom gland.

It localises to the secreted. It is found in the target cell membrane. Functionally, shows cytolytic activity on many different cells by forming pore in lipid membranes. In vivo, increases heart rate or kills the animal by cardiac arrest. In addition, it binds to heparin with high affinity, interacts with Kv channel-interacting protein 1 (KCNIP1) in a calcium-independent manner, and binds to integrin alpha-V/beta-3 (ITGAV/ITGB3) with moderate affinity. This is Cytotoxin 1 from Naja mossambica (Mozambique spitting cobra).